A 619-amino-acid chain; its full sequence is Trihelix transcription factor GTL2 (619 aa).

Disordered regions lie at residues 11-41 (HRFIASPPPPPPLPPHQPAAERSLPFPVSFS) and 62-100 (HHHHHHHHHDIKDGGATTGEWIGQTDHDDSDNHHQHHHH). A compositionally biased stretch (pro residues) spans 16 to 27 (SPPPPPPLPPHQ). The Myb-like 1 domain maps to 102-154 (PWCSDEVLALLRFRSTVENWFPEFTWEHTSRKLAEVGFKRSPQECKEKFEEEE). Residues 307–361 (VRNMIAQQEEMHKKLLEDMVKKEEEKIAREEAWKKQEIERVNKEVEIRAQEQAMA) are a coiled coil. Disordered stretches follow at residues 382-414 (VVQNPTSPSQDSSSLALRKTQGRRKFQTSSSLL) and 434-458 (STKTLKPKNQNPKPPKSDDKSDLGK). Positions 384–396 (QNPTSPSQDSSSL) are enriched in polar residues. Low complexity predominate over residues 435–444 (TKTLKPKNQN). Over residues 448 to 458 (PKSDDKSDLGK) the composition is skewed to basic and acidic residues. One can recognise a Myb-like 2 domain in the interval 459–526 (RWPKDEVLAL…RCKEKWENIN (68 aa)). A Nuclear localization signal motif is present at residues 503–510 (SKKMLEIG). Residues 557-619 (SQPPTGTTAT…VQFSGFDLEF (63 aa)) are disordered. Residues 561-574 (TGTTATTATTATSA) show a composition bias toward low complexity. Residues 575 to 585 (RDLDTRPEENR) show a composition bias toward basic and acidic residues.

The protein resides in the nucleus. In terms of biological role, probable transcription factor that binds specific DNA sequence. This Arabidopsis thaliana (Mouse-ear cress) protein is Trihelix transcription factor GTL2.